Consider the following 524-residue polypeptide: Germ cell-less protein-like 1 (524 aa).

The interval 1–37 (MGALSSRVLRPAGRTEQPEPTPGAGGAARRSDAGEDA) is disordered. The Nuclear localization signal motif lies at 47-53 (GRKRKRS). Residues 63 to 83 (DSETDDDEDEGDEQQRLLNTP) are disordered. Ser64 carries the post-translational modification Phosphoserine. Residues 65 to 74 (ETDDDEDEGD) show a composition bias toward acidic residues. Thr66 bears the Phosphothreonine mark. A Nuclear localization signal motif is present at residues 83–89 (PRRKKLK). One can recognise a BTB domain in the interval 106-176 (SDIKICALGE…LYRDDVLIKP (71 aa)).

Interacts with TMPO-Beta, TSG101 and TFDP2. Interacts with EMD. In terms of tissue distribution, ubiquitously expressed at low levels throughout development and in adult tissues.

The protein localises to the nucleus matrix. Possible function in spermatogenesis. Enhances the degradation of MDM2 and increases the amount of p53 probably by modulating the nucleocytoplasmic transport. In Mus musculus (Mouse), this protein is Germ cell-less protein-like 1 (Gmcl1).